A 335-amino-acid chain; its full sequence is Ketol-acid reductoisomerase (NADP(+)) 2 (335 aa).

The region spanning 1–180 (MKTYYEKDAN…GCTRAGVIET (180 aa)) is the KARI N-terminal Rossmann domain. NADP(+) contacts are provided by residues 24–27 (YGSQ), Arg-47, Ser-51, and 81–84 (DEQQ). His-106 is an active-site residue. Gly-132 contacts NADP(+). The region spanning 181 to 326 (TFQEETETDL…AELREMMSWI (146 aa)) is the KARI C-terminal knotted domain. Positions 189, 193, 225, and 229 each coordinate Mg(2+). Position 250 (Ser-250) interacts with substrate.

Belongs to the ketol-acid reductoisomerase family. Requires Mg(2+) as cofactor.

It catalyses the reaction (2R)-2,3-dihydroxy-3-methylbutanoate + NADP(+) = (2S)-2-acetolactate + NADPH + H(+). The enzyme catalyses (2R,3R)-2,3-dihydroxy-3-methylpentanoate + NADP(+) = (S)-2-ethyl-2-hydroxy-3-oxobutanoate + NADPH + H(+). It participates in amino-acid biosynthesis; L-isoleucine biosynthesis; L-isoleucine from 2-oxobutanoate: step 2/4. It functions in the pathway amino-acid biosynthesis; L-valine biosynthesis; L-valine from pyruvate: step 2/4. In terms of biological role, involved in the biosynthesis of branched-chain amino acids (BCAA). Catalyzes an alkyl-migration followed by a ketol-acid reduction of (S)-2-acetolactate (S2AL) to yield (R)-2,3-dihydroxy-isovalerate. In the isomerase reaction, S2AL is rearranged via a Mg-dependent methyl migration to produce 3-hydroxy-3-methyl-2-ketobutyrate (HMKB). In the reductase reaction, this 2-ketoacid undergoes a metal-dependent reduction by NADPH to yield (R)-2,3-dihydroxy-isovalerate. In Bacillus cereus (strain ATCC 10987 / NRS 248), this protein is Ketol-acid reductoisomerase (NADP(+)) 2.